Here is a 42-residue protein sequence, read N- to C-terminus: Photosystem II reaction center protein J (42 aa).

The helical transmembrane segment at 10 to 30 (IPLWLVATVAGLAVIALLGVF) threads the bilayer.

Belongs to the PsbJ family. As to quaternary structure, PSII is composed of 1 copy each of membrane proteins PsbA, PsbB, PsbC, PsbD, PsbE, PsbF, PsbH, PsbI, PsbJ, PsbK, PsbL, PsbM, PsbT, PsbX, PsbY, PsbZ, Psb30/Ycf12, at least 3 peripheral proteins of the oxygen-evolving complex and a large number of cofactors. It forms dimeric complexes.

It is found in the plastid. The protein resides in the chloroplast thylakoid membrane. In terms of biological role, one of the components of the core complex of photosystem II (PSII). PSII is a light-driven water:plastoquinone oxidoreductase that uses light energy to abstract electrons from H(2)O, generating O(2) and a proton gradient subsequently used for ATP formation. It consists of a core antenna complex that captures photons, and an electron transfer chain that converts photonic excitation into a charge separation. The polypeptide is Photosystem II reaction center protein J (Chlorokybus atmophyticus (Soil alga)).